The following is a 578-amino-acid chain: Membrane protein insertase YidC (578 aa).

Residues 7 to 27 (FLAIAISLGILLGFQGLYRHF) form a helical membrane-spanning segment. The interval 35–70 (ARTATNAGQGKPNNTLGAVPTDATASQSPPPKEGAR) is disordered. Residues 37-50 (TATNAGQGKPNNTL) are compositionally biased toward polar residues. 4 helical membrane passes run 362-382 (LVGN…AAFY), 436-456 (LPML…FVTI), 491-511 (HISP…TMYL), and 530-550 (FMPI…VIYW).

This sequence belongs to the OXA1/ALB3/YidC family. Type 1 subfamily. As to quaternary structure, interacts with the Sec translocase complex via SecD. Specifically interacts with transmembrane segments of nascent integral membrane proteins during membrane integration.

The protein localises to the cell inner membrane. Functionally, required for the insertion and/or proper folding and/or complex formation of integral membrane proteins into the membrane. Involved in integration of membrane proteins that insert both dependently and independently of the Sec translocase complex, as well as at least some lipoproteins. Aids folding of multispanning membrane proteins. This Granulibacter bethesdensis (strain ATCC BAA-1260 / CGDNIH1) protein is Membrane protein insertase YidC.